The following is an 892-amino-acid chain: Alanine--tRNA ligase (892 aa).

The Zn(2+) site is built by His-577, His-581, Cys-680, and His-684.

It belongs to the class-II aminoacyl-tRNA synthetase family. Zn(2+) serves as cofactor.

The protein localises to the cytoplasm. It catalyses the reaction tRNA(Ala) + L-alanine + ATP = L-alanyl-tRNA(Ala) + AMP + diphosphate. Its function is as follows. Catalyzes the attachment of alanine to tRNA(Ala) in a two-step reaction: alanine is first activated by ATP to form Ala-AMP and then transferred to the acceptor end of tRNA(Ala). Also edits incorrectly charged Ser-tRNA(Ala) and Gly-tRNA(Ala) via its editing domain. The protein is Alanine--tRNA ligase of Paenarthrobacter aurescens (strain TC1).